An 80-amino-acid polypeptide reads, in one-letter code: Clavanin-E (80 aa).

The signal sequence occupies residues methionine 1–serine 19. A propeptide spanning residues leucine 20–lysine 29 is cleaved from the precursor. Residue phenylalanine 52 is modified to Phenylalanine amide. Positions aspartate 54 to glutamine 80 are excised as a propeptide.

The protein resides in the secreted. Its function is as follows. Has antimicrobial activity. The sequence is that of Clavanin-E from Styela clava (Sea squirt).